The chain runs to 967 residues: Leucine--tRNA ligase (967 aa).

The 'HIGH' region signature appears at 43–53 (PYLSGHLHVGH). Residues 650-654 (KMSKS) carry the 'KMSKS' region motif. Position 653 (Lys-653) interacts with ATP.

It belongs to the class-I aminoacyl-tRNA synthetase family.

The protein localises to the cytoplasm. The enzyme catalyses tRNA(Leu) + L-leucine + ATP = L-leucyl-tRNA(Leu) + AMP + diphosphate. This chain is Leucine--tRNA ligase, found in Pyrococcus horikoshii (strain ATCC 700860 / DSM 12428 / JCM 9974 / NBRC 100139 / OT-3).